The primary structure comprises 1396 residues: DNA-directed RNA polymerase subunit beta' (1396 aa).

Zn(2+) contacts are provided by C72, C74, C87, and C90. 3 residues coordinate Mg(2+): D463, D465, and D467. Residues C814, C889, C896, and C899 each contribute to the Zn(2+) site.

This sequence belongs to the RNA polymerase beta' chain family. As to quaternary structure, the RNAP catalytic core consists of 2 alpha, 1 beta, 1 beta' and 1 omega subunit. When a sigma factor is associated with the core the holoenzyme is formed, which can initiate transcription. Requires Mg(2+) as cofactor. Zn(2+) is required as a cofactor.

The catalysed reaction is RNA(n) + a ribonucleoside 5'-triphosphate = RNA(n+1) + diphosphate. DNA-dependent RNA polymerase catalyzes the transcription of DNA into RNA using the four ribonucleoside triphosphates as substrates. The sequence is that of DNA-directed RNA polymerase subunit beta' from Chlamydia muridarum (strain MoPn / Nigg).